Reading from the N-terminus, the 224-residue chain is UPF0173 metal-dependent hydrolase TON_1314 (224 aa).

It belongs to the UPF0173 family.

This Thermococcus onnurineus (strain NA1) protein is UPF0173 metal-dependent hydrolase TON_1314.